The sequence spans 386 residues: Endonuclease III homolog 2, chloroplastic (386 aa).

The transit peptide at 1 to 50 directs the protein to the chloroplast; that stretch reads MILTGAASTFPIVARVLNAMNRRMYAATTLSSAKSISAESLNLRSDSNSE. Residues 44-66 are disordered; that stretch reads RSDSNSEAAHGASESETRVSLRK. Residues 252 to 278 form the HhH domain; the sequence is YDGDIPRTLEELLSLPGVGPKIAHLVL. The Nucleophile; for N-glycosylase activity role is filled by Lys-272. Cys-347, Cys-354, Cys-357, and Cys-363 together coordinate [4Fe-4S] cluster.

It belongs to the Nth/MutY family. The cofactor is [4Fe-4S] cluster.

Its subcellular location is the plastid. It is found in the chloroplast stroma. The protein resides in the chloroplast nucleoid. It catalyses the reaction 2'-deoxyribonucleotide-(2'-deoxyribose 5'-phosphate)-2'-deoxyribonucleotide-DNA = a 3'-end 2'-deoxyribonucleotide-(2,3-dehydro-2,3-deoxyribose 5'-phosphate)-DNA + a 5'-end 5'-phospho-2'-deoxyribonucleoside-DNA + H(+). In terms of biological role, bifunctional DNA N-glycosylase with associated apurinic/apyrimidinic (AP) lyase function that catalyzes the first step in base excision repair (BER), the primary repair pathway for the repair of oxidative DNA damage. The DNA N-glycosylase activity releases the damaged DNA base from DNA by cleaving the N-glycosidic bond, leaving an AP site. The AP lyase activity cleaves the phosphodiester bond 3' to the AP site by a beta-elimination. Primarily recognizes and repairs oxidative base damage of pyrimidines. This chain is Endonuclease III homolog 2, chloroplastic (NTH2), found in Arabidopsis thaliana (Mouse-ear cress).